We begin with the raw amino-acid sequence, 324 residues long: 4-hydroxy-3-methylbut-2-enyl diphosphate reductase (324 aa).

C13 contacts [4Fe-4S] cluster. (2E)-4-hydroxy-3-methylbut-2-enyl diphosphate-binding residues include H41 and H75. Residues H41 and H75 each coordinate dimethylallyl diphosphate. Isopentenyl diphosphate is bound by residues H41 and H75. [4Fe-4S] cluster is bound at residue C97. (2E)-4-hydroxy-3-methylbut-2-enyl diphosphate is bound at residue H125. H125 provides a ligand contact to dimethylallyl diphosphate. An isopentenyl diphosphate-binding site is contributed by H125. E127 functions as the Proton donor in the catalytic mechanism. T168 serves as a coordination point for (2E)-4-hydroxy-3-methylbut-2-enyl diphosphate. Position 225 (C225) interacts with [4Fe-4S] cluster. (2E)-4-hydroxy-3-methylbut-2-enyl diphosphate is bound by residues S253, S254, N255, and S302. Residues S253, S254, N255, and S302 each coordinate dimethylallyl diphosphate. S253, S254, N255, and S302 together coordinate isopentenyl diphosphate.

This sequence belongs to the IspH family. The cofactor is [4Fe-4S] cluster.

The enzyme catalyses isopentenyl diphosphate + 2 oxidized [2Fe-2S]-[ferredoxin] + H2O = (2E)-4-hydroxy-3-methylbut-2-enyl diphosphate + 2 reduced [2Fe-2S]-[ferredoxin] + 2 H(+). It catalyses the reaction dimethylallyl diphosphate + 2 oxidized [2Fe-2S]-[ferredoxin] + H2O = (2E)-4-hydroxy-3-methylbut-2-enyl diphosphate + 2 reduced [2Fe-2S]-[ferredoxin] + 2 H(+). It functions in the pathway isoprenoid biosynthesis; dimethylallyl diphosphate biosynthesis; dimethylallyl diphosphate from (2E)-4-hydroxy-3-methylbutenyl diphosphate: step 1/1. It participates in isoprenoid biosynthesis; isopentenyl diphosphate biosynthesis via DXP pathway; isopentenyl diphosphate from 1-deoxy-D-xylulose 5-phosphate: step 6/6. In terms of biological role, catalyzes the conversion of 1-hydroxy-2-methyl-2-(E)-butenyl 4-diphosphate (HMBPP) into a mixture of isopentenyl diphosphate (IPP) and dimethylallyl diphosphate (DMAPP). Acts in the terminal step of the DOXP/MEP pathway for isoprenoid precursor biosynthesis. The sequence is that of 4-hydroxy-3-methylbut-2-enyl diphosphate reductase from Chlorobium limicola (strain DSM 245 / NBRC 103803 / 6330).